The chain runs to 348 residues: Heat-inducible transcription repressor HrcA (348 aa).

It belongs to the HrcA family.

Functionally, negative regulator of class I heat shock genes (grpE-dnaK-dnaJ and groELS operons). Prevents heat-shock induction of these operons. The chain is Heat-inducible transcription repressor HrcA from Ruminiclostridium cellulolyticum (strain ATCC 35319 / DSM 5812 / JCM 6584 / H10) (Clostridium cellulolyticum).